Reading from the N-terminus, the 504-residue chain is GTPase Der (504 aa).

The 164-residue stretch at 3–166 (PVVALVGRPN…QVLAPLAEKL (164 aa)) folds into the EngA-type G 1 domain. Residues 9–16 (GRPNVGKS), 56–60 (DTGGI), and 118–121 (NKTD) each bind GTP. A disordered region spans residues 171–190 (VDSDENVADDEQDEWDSDFD). Acidic residues predominate over residues 172 to 190 (DSDENVADDEQDEWDSDFD). Residues 216–389 (IKIAIVGRPN…SIQEAYQCAT (174 aa)) form the EngA-type G 2 domain. GTP-binding positions include 222–229 (GRPNVGKS), 269–273 (DTAGV), and 334–337 (NKWD). The 85-residue stretch at 390 to 474 (KKMTTSMLTR…PIRVLFQEGN (85 aa)) folds into the KH-like domain.

It belongs to the TRAFAC class TrmE-Era-EngA-EngB-Septin-like GTPase superfamily. EngA (Der) GTPase family. As to quaternary structure, associates with the 50S ribosomal subunit.

Functionally, GTPase that plays an essential role in the late steps of ribosome biogenesis. This is GTPase Der from Glaesserella parasuis serovar 5 (strain SH0165) (Haemophilus parasuis).